Reading from the N-terminus, the 435-residue chain is GTPase Obg (435 aa).

Residues 1 to 159 (MAFIDKCKIV…VEVLLELKTI (159 aa)) form the Obg domain. The 170-residue stretch at 160 to 329 (ADIGIIGLPN…MLDDVIKIYF (170 aa)) folds into the OBG-type G domain. GTP is bound by residues 166–173 (GLPNAGKS), 191–195 (FTTLN), 212–215 (DIPG), 282–285 (NKID), and 310–312 (SAL). Positions 173 and 193 each coordinate Mg(2+). Residues 357–435 (KSKELDKTIE…IYDITLEFEE (79 aa)) form the OCT domain.

The protein belongs to the TRAFAC class OBG-HflX-like GTPase superfamily. OBG GTPase family. As to quaternary structure, monomer. Requires Mg(2+) as cofactor.

Its subcellular location is the cytoplasm. Its function is as follows. An essential GTPase which binds GTP, GDP and possibly (p)ppGpp with moderate affinity, with high nucleotide exchange rates and a fairly low GTP hydrolysis rate. Plays a role in control of the cell cycle, stress response, ribosome biogenesis and in those bacteria that undergo differentiation, in morphogenesis control. This Ureaplasma parvum serovar 3 (strain ATCC 27815 / 27 / NCTC 11736) protein is GTPase Obg.